The following is a 150-amino-acid chain: D-aminoacyl-tRNA deacylase (150 aa).

The Gly-cisPro motif, important for rejection of L-amino acids signature appears at 138-139 (GP).

The protein belongs to the DTD family. Homodimer.

It is found in the cytoplasm. It carries out the reaction glycyl-tRNA(Ala) + H2O = tRNA(Ala) + glycine + H(+). The catalysed reaction is a D-aminoacyl-tRNA + H2O = a tRNA + a D-alpha-amino acid + H(+). Functionally, an aminoacyl-tRNA editing enzyme that deacylates mischarged D-aminoacyl-tRNAs. Also deacylates mischarged glycyl-tRNA(Ala), protecting cells against glycine mischarging by AlaRS. Acts via tRNA-based rather than protein-based catalysis; rejects L-amino acids rather than detecting D-amino acids in the active site. By recycling D-aminoacyl-tRNA to D-amino acids and free tRNA molecules, this enzyme counteracts the toxicity associated with the formation of D-aminoacyl-tRNA entities in vivo and helps enforce protein L-homochirality. The polypeptide is D-aminoacyl-tRNA deacylase (Flavobacterium johnsoniae (strain ATCC 17061 / DSM 2064 / JCM 8514 / BCRC 14874 / CCUG 350202 / NBRC 14942 / NCIMB 11054 / UW101) (Cytophaga johnsonae)).